The following is a 204-amino-acid chain: Small heat shock protein, chloroplastic (204 aa).

The segment at 34 to 55 (QMGRVDHDHELDDRSNRAPISR) is disordered. A compositionally biased stretch (basic and acidic residues) spans 37–49 (RVDHDHELDDRSN). The 107-residue stretch at 98–204 (GSGRAMRRGW…KKDVFQVMVD (107 aa)) folds into the sHSP domain.

The protein belongs to the small heat shock protein (HSP20) family.

It localises to the plastid. The protein localises to the chloroplast stroma. The protein is Small heat shock protein, chloroplastic (HSP23) of Oxybasis rubra (Red goosefoot).